Reading from the N-terminus, the 263-residue chain is Acyl-[acyl-carrier-protein]--UDP-N-acetylglucosamine O-acyltransferase (263 aa).

It belongs to the transferase hexapeptide repeat family. LpxA subfamily. In terms of assembly, homotrimer.

It is found in the cytoplasm. It carries out the reaction a (3R)-hydroxyacyl-[ACP] + UDP-N-acetyl-alpha-D-glucosamine = a UDP-3-O-[(3R)-3-hydroxyacyl]-N-acetyl-alpha-D-glucosamine + holo-[ACP]. Its pathway is glycolipid biosynthesis; lipid IV(A) biosynthesis; lipid IV(A) from (3R)-3-hydroxytetradecanoyl-[acyl-carrier-protein] and UDP-N-acetyl-alpha-D-glucosamine: step 1/6. Involved in the biosynthesis of lipid A, a phosphorylated glycolipid that anchors the lipopolysaccharide to the outer membrane of the cell. The polypeptide is Acyl-[acyl-carrier-protein]--UDP-N-acetylglucosamine O-acyltransferase (Xanthomonas campestris pv. campestris (strain 8004)).